The chain runs to 331 residues: Holliday junction branch migration complex subunit RuvB (331 aa).

The tract at residues 1–186 (MAKTMMQDRL…FGIVQRLEFY (186 aa)) is large ATPase domain (RuvB-L). ATP is bound by residues Ile-25, Arg-26, Gly-67, Lys-70, Thr-71, Thr-72, 133–135 (EDF), Arg-176, Tyr-186, and Arg-223. Position 71 (Thr-71) interacts with Mg(2+). The small ATPAse domain (RuvB-S) stretch occupies residues 187–257 (NIADLTTIVS…IAGSALDMLA (71 aa)). The interval 260–331 (RRGLDHLDRR…LTQMAIDQMV (72 aa)) is head domain (RuvB-H). DNA contacts are provided by Arg-296, Arg-315, and Arg-320.

The protein belongs to the RuvB family. In terms of assembly, homohexamer. Forms an RuvA(8)-RuvB(12)-Holliday junction (HJ) complex. HJ DNA is sandwiched between 2 RuvA tetramers; dsDNA enters through RuvA and exits via RuvB. An RuvB hexamer assembles on each DNA strand where it exits the tetramer. Each RuvB hexamer is contacted by two RuvA subunits (via domain III) on 2 adjacent RuvB subunits; this complex drives branch migration. In the full resolvosome a probable DNA-RuvA(4)-RuvB(12)-RuvC(2) complex forms which resolves the HJ.

It localises to the cytoplasm. It carries out the reaction ATP + H2O = ADP + phosphate + H(+). In terms of biological role, the RuvA-RuvB-RuvC complex processes Holliday junction (HJ) DNA during genetic recombination and DNA repair, while the RuvA-RuvB complex plays an important role in the rescue of blocked DNA replication forks via replication fork reversal (RFR). RuvA specifically binds to HJ cruciform DNA, conferring on it an open structure. The RuvB hexamer acts as an ATP-dependent pump, pulling dsDNA into and through the RuvAB complex. RuvB forms 2 homohexamers on either side of HJ DNA bound by 1 or 2 RuvA tetramers; 4 subunits per hexamer contact DNA at a time. Coordinated motions by a converter formed by DNA-disengaged RuvB subunits stimulates ATP hydrolysis and nucleotide exchange. Immobilization of the converter enables RuvB to convert the ATP-contained energy into a lever motion, pulling 2 nucleotides of DNA out of the RuvA tetramer per ATP hydrolyzed, thus driving DNA branch migration. The RuvB motors rotate together with the DNA substrate, which together with the progressing nucleotide cycle form the mechanistic basis for DNA recombination by continuous HJ branch migration. Branch migration allows RuvC to scan DNA until it finds its consensus sequence, where it cleaves and resolves cruciform DNA. This is Holliday junction branch migration complex subunit RuvB from Psychrobacter arcticus (strain DSM 17307 / VKM B-2377 / 273-4).